The chain runs to 151 residues: Deoxyuridine 5'-triphosphate nucleotidohydrolase (151 aa).

Substrate is bound by residues 70–72, Asn-83, and 87–89; these read RSG and VID.

This sequence belongs to the dUTPase family. Requires Mg(2+) as cofactor.

The catalysed reaction is dUTP + H2O = dUMP + diphosphate + H(+). It functions in the pathway pyrimidine metabolism; dUMP biosynthesis; dUMP from dCTP (dUTP route): step 2/2. This enzyme is involved in nucleotide metabolism: it produces dUMP, the immediate precursor of thymidine nucleotides and it decreases the intracellular concentration of dUTP so that uracil cannot be incorporated into DNA. This chain is Deoxyuridine 5'-triphosphate nucleotidohydrolase, found in Desulfitobacterium hafniense (strain DSM 10664 / DCB-2).